The following is a 349-amino-acid chain: PDZ and LIM domain protein 2 (349 aa).

One can recognise a PDZ domain in the interval 1-84 (MALTVNVVGP…PLRLQLDRSQ (84 aa)). Disordered stretches follow at residues 72–95 (SASP…NGEG) and 108–147 (LRTH…PIAL). Polar residues-rich tracts occupy residues 81–90 (DRSQTASPGQ) and 108–121 (LRTH…QRSA). Serine 124, serine 127, serine 129, serine 134, and serine 137 each carry phosphoserine. Residues threonine 138 and threonine 142 each carry the phosphothreonine modification. 2 positions are modified to phosphoserine: serine 143 and serine 163. Disordered regions lie at residues 168–212 (ATHH…SSLD) and 250–272 (ERGG…PTSR). Positions 176-192 (GQPTSQQAGHSSPSDST) are enriched in polar residues. Residues serine 199, serine 204, serine 205, serine 209, serine 210, and serine 263 each carry the phosphoserine modification. Residues 199-211 (SPGRPSSPRLSSL) show a composition bias toward low complexity. Positions 260–270 (SSLSPKASLPT) are enriched in polar residues. Positions 281-341 (HTCEKCSVNI…EKHARQRYSM (61 aa)) constitute an LIM zinc-binding domain.

As to quaternary structure, interacts with alpha-actinins ACTN1 and ACTN4, FLNA and MYH9. Interacts (via LIM zinc-binding domain) with MKRN2. In terms of tissue distribution, highly expressed in cornea and lung. Expressed at intermediate level in sclera and combined tissues of the eye irido-corneal angle. Specifically expressed in the corneal epithelial cells but not in other corneal layers.

Its subcellular location is the cytoplasm. The protein localises to the cytoskeleton. In terms of biological role, probable adapter protein located at the actin cytoskeleton that promotes cell attachment. Necessary for the migratory capacity of epithelial cells. Overexpression enhances cell adhesion to collagen and fibronectin and suppresses anchorage independent growth. May contribute to tumor cell migratory capacity. The protein is PDZ and LIM domain protein 2 (Pdlim2) of Rattus norvegicus (Rat).